Consider the following 418-residue polypeptide: Vasopressin V1a receptor (418 aa).

Low complexity predominate over residues 1–15 (MRFSGSPSPGPSNSS). The segment at 1 to 20 (MRFSGSPSPGPSNSSRWWPL) is disordered. Over 1–51 (MRFSGSPSPGPSNSSRWWPLDAGDANTSGDLAGLGEDGGPQADTRNEELAK) the chain is Extracellular. 2 N-linked (GlcNAc...) asparagine glycosylation sites follow: N13 and N26. The chain crosses the membrane as a helical span at residues 52–75 (LEIAVLAVIFVVAVLGNSSVLLAL). Residues 76–87 (HRTPRKTSRMHL) are Cytoplasmic-facing. A helical membrane pass occupies residues 88–109 (FIRHLSLADLAVAFFQVLPQLG). The Extracellular portion of the chain corresponds to 110–124 (WDITYRFRGPDGLCR). The cysteines at positions 123 and 202 are disulfide-linked. Residues 125–146 (VVKHMQVFAMFASAYMLVVMTA) traverse the membrane as a helical segment. At 147-167 (DRYIAVCHPLKTLQQPARRSR) the chain is on the cytoplasmic side. Residues 168-189 (LMIAAAWVLSFVLSTPQYFVFS) traverse the membrane as a helical segment. Residues 190–217 (MVEVSNVTKTYDCWANFIHPWGLPAYVT) lie on the Extracellular side of the membrane. N195 is a glycosylation site (N-linked (GlcNAc...) asparagine). The helical transmembrane segment at 218 to 238 (WMTGSVFVAPVVILGTCYGFI) threads the bilayer. Over 239–293 (CYHIWRKVRGKTAGRQGGPAEGAGESALYRGVLHARCVSSVKTISRAKIRTVKMT) the chain is Cytoplasmic. The chain crosses the membrane as a helical span at residues 294-313 (FVIVTAYIVCWAPFFIIQMW). The Extracellular portion of the chain corresponds to 314–331 (SAWDKNFSWVESENPATA). A glycan (N-linked (GlcNAc...) asparagine) is linked at N319. The chain crosses the membrane as a helical span at residues 332 to 351 (IPALLASLNSCCNPWIYMFF). Topologically, residues 352–418 (SGHLLQDCAQ…KSIKFIPVST (67 aa)) are cytoplasmic. S-palmitoyl cysteine attachment occurs at residues C365 and C366. The segment at 377 to 418 (GSDSMSRRQTSFTNNRSPTNSMGTWKDSPKSSKSIKFIPVST) is disordered. Residues 383 to 399 (RRQTSFTNNRSPTNSMG) show a composition bias toward polar residues. S404 carries the phosphoserine modification.

Belongs to the G-protein coupled receptor 1 family. Vasopressin/oxytocin receptor subfamily.

The protein resides in the cell membrane. Its function is as follows. Receptor for arginine vasopressin. The activity of this receptor is mediated by G proteins which activate a phosphatidyl-inositol-calcium second messenger system. The protein is Vasopressin V1a receptor (AVPR1A) of Ovis aries (Sheep).